The sequence spans 589 residues: Zinc finger protein 703 (589 aa).

Residues 102-315 (SQIGKPDPPP…GTGHIAPVSP (214 aa)) are disordered. Residues 113 to 122 (SKLGSLSSSS) are compositionally biased toward low complexity. The segment covering 137 to 148 (SGEHQNLDDKSS) has biased composition (basic and acidic residues). Residues 179-188 (NGSSSSVTCT) show a composition bias toward polar residues. Residues 196–206 (SPRASSPQQTS) show a composition bias toward low complexity. A compositionally biased stretch (polar residues) spans 214-230 (QSQSPLSQKTAHLQTTH). Positions 237–250 (GSDPGNDSSSSGSD) are enriched in low complexity. Over residues 251–262 (RNGKKDSDHNKS) the composition is skewed to basic and acidic residues. Residues 272–299 (SSHARASVNSSSASSSSSPQPDSKTDSQ) are compositionally biased toward low complexity. The segment at 408–460 (VHDPSSALKSGFPLMYPTHHLHSLHPSSLSSSATSSLSHPLYTYGFMLPNETL) is required for interaction with Groucho and hdac2 plays an important role in repression of transcription. Residues 462–490 (HACNWVSVGGPCDKRFATSEELLAHLRTH) form a C2H2-type zinc finger. Residues 498–589 (GKLLSGYPSS…LGSASALGYQ (92 aa)) form a required for self-association and nuclear localization region.

Belongs to the Elbow/Noc family. In terms of assembly, self-associates. Interacts with nlz2. May interact with Groucho corepressor proteins.

The protein localises to the nucleus. It localises to the cytoplasm. Functionally, transcriptional corepressor which does not bind directly to DNA and may regulate transcription through recruitment of histone deacetylases to gene promoters. Required for segmental gene expression during hindbrain development. May regulate cell adhesion, migration and proliferation. This Danio rerio (Zebrafish) protein is Zinc finger protein 703 (znf703).